We begin with the raw amino-acid sequence, 183 residues long: MTTASPSQVRQNYHQDSEAAINRQINLELYASYVYLSMSYYFDRDDVALKNFAKYFLHQSHEEREHAEKLMKLQNQRGGRIFLQDIKKPDRDDWENGLNAMECALHLEKSVNQSLLELHKLATDKNDPHLCDFIETHYLNEQVKSIKELGDHVTNLRKMGAPESGMAEYLFDKHTLGNSDNES.

Position 1 is an N-acetylmethionine (methionine 1). Residue threonine 2 is modified to N-acetylthreonine; in Ferritin heavy chain, N-terminally processed. The Ferritin-like diiron domain maps to 11–160 (QNYHQDSEAA…DHVTNLRKMG (150 aa)). Glutamate 28, glutamate 63, histidine 66, glutamate 108, and glutamine 142 together coordinate Fe cation. A phosphoserine mark is found at serine 179 and serine 183.

Belongs to the ferritin family. As to quaternary structure, oligomer of 24 subunits. There are two types of subunits: L (light) chain and H (heavy) chain. The major chain can be light or heavy, depending on the species and tissue type. The functional molecule forms a roughly spherical shell with a diameter of 12 nm and contains a central cavity into which the insoluble mineral iron core is deposited. Interacts with NCOA4; NCOA4 promotes targeting of the iron-binding ferritin complex to autolysosomes following starvation or iron depletion.

The protein localises to the cytoplasm. It is found in the lysosome. It localises to the cytoplasmic vesicle. The protein resides in the autophagosome. The catalysed reaction is 4 Fe(2+) + O2 + 4 H(+) = 4 Fe(3+) + 2 H2O. Stores iron in a soluble, non-toxic, readily available form. Important for iron homeostasis. Has ferroxidase activity. Iron is taken up in the ferrous form and deposited as ferric hydroxides after oxidation. Also plays a role in delivery of iron to cells. Mediates iron uptake in capsule cells of the developing kidney. Delivery to lysosomes is mediated by the cargo receptor NCOA4 for autophagic degradation and release of iron. This chain is Ferritin heavy chain (FTH1), found in Canis lupus familiaris (Dog).